Here is a 271-residue protein sequence, read N- to C-terminus: Inactive phospholipid phosphatase 7 (271 aa).

The segment at 1–66 is disordered; the sequence is MPASQSRARA…RERRQSQQLP (66 aa). At 1–112 the chain is on the cytoplasmic side; sequence MPASQSRARA…AASWASARSM (112 aa). Phosphoserine occurs at positions 43 and 62. The interaction with MTOR stretch occupies residues 70-91; the sequence is CMQLNPSFKGIAFNSLLAIDIC. The helical transmembrane segment at 113–133 threads the bilayer; sequence VKLIGITGHGIPWIGGTILCL. Residues 134–141 lie on the Extracellular side of the membrane; it reads VKSSTLAG. Residues 142–162 traverse the membrane as a helical segment; sequence QEVLMNLLLALLLDIMTVAGV. Residues 163-202 lie on the Cytoplasmic side of the membrane; it reads QKLIKRRGPYETSPSLLDYLTMDIYAFPAGHASRAAMVSK. The helical transmembrane segment at 203-223 threads the bilayer; the sequence is FFLSHLVLAVPLRVLLVLWAL. Residues 224-239 are Extracellular-facing; sequence CVGLSRVMIGRHHVTD. Residues 240–260 traverse the membrane as a helical segment; the sequence is VLSGFVIGYLQFRLVELVWMP. At 261–271 the chain is on the cytoplasmic side; sequence SSTCQMLISAW.

Belongs to the PA-phosphatase related phosphoesterase family. As to quaternary structure, homo and heterooligomer. Interacts with MTOR; controls MTOR-dependent IGF2 expression during myoblast differentiation.

It is found in the nucleus envelope. The protein resides in the endoplasmic reticulum membrane. It localises to the membrane. Functionally, plays a role as negative regulator of myoblast differentiation, in part through effects on MTOR signaling. Has no detectable enzymatic activity. The protein is Inactive phospholipid phosphatase 7 of Homo sapiens (Human).